Reading from the N-terminus, the 325-residue chain is Olfactory receptor 10AC1 (325 aa).

The Extracellular portion of the chain corresponds to 1 to 26 (MDSPSNATVPCGFLLQGFSEFPHLRP). Residue Asn6 is glycosylated (N-linked (GlcNAc...) asparagine). A helical membrane pass occupies residues 27–47 (VLFLLLLGVHLATLGGNLLIL). Over 48 to 57 (VAVASMPSRQ) the chain is Cytoplasmic. The chain crosses the membrane as a helical span at residues 58-78 (PMLLFLCQLSAIELCYTLVVV). Topologically, residues 79–101 (PRSLVDLSTPGHRRGSPISFLSC) are extracellular. The helical transmembrane segment at 102-122 (AFQMQMFVALGGAECFLLAAM) threads the bilayer. Residues 123–147 (AYDRYVAICHPLRYAAVVTPGLCAR) are Cytoplasmic-facing. The helical transmembrane segment at 148 to 168 (LALACCLRGLAVSVGLTVAIF) threads the bilayer. The Extracellular portion of the chain corresponds to 169-171 (HLP). The chain crosses the membrane as a helical span at residues 172-192 (FCGSRLLLHFFCDITALLHLA). Over 193–200 (CTRSYADE) the chain is Cytoplasmic. A helical transmembrane segment spans residues 201-221 (LPLLGACLVLLLLPSVLILAS). At 222–243 (YGAIAAALRRLRCPKGRGKAAS) the chain is on the extracellular side. The helical transmembrane segment at 244–264 (TCALHLAVTFLHYGCATFMYV) threads the bilayer. The Cytoplasmic segment spans residues 265-325 (RPRASYSPRL…QAPGGDLREL (61 aa)).

It belongs to the G-protein coupled receptor 1 family.

It localises to the cell membrane. Odorant receptor. This is Olfactory receptor 10AC1 (OR10AC1) from Homo sapiens (Human).